The primary structure comprises 2235 residues: Mediator of RNA polymerase II transcription subunit 12 (2235 aa).

Residues 16–35 are compositionally biased toward low complexity; sequence SAIGGASARDSGRADSSSIG. Disordered stretches follow at residues 16 to 80, 268 to 293, 835 to 858, 1900 to 1959, 2134 to 2160, and 2183 to 2202; these read SAIG…EENL, FPAQ…SPAS, SVKR…GCED, SSVT…SPAA, GSTA…AQGK, and WTLL…ASNS. Residues 280–293 show a composition bias toward polar residues; it reads MLYTGSMQKNSPAS. Residues 1900 to 1916 show a composition bias toward polar residues; sequence SSVTNRSTTSNKQMGTA. A compositionally biased stretch (low complexity) spans 1917 to 1927; that stretch reads SSGSEISSNKG. Positions 2134–2155 are enriched in polar residues; it reads GSTAAAGTNQRNSPAISKSGTA. Positions 2191–2202 are enriched in low complexity; that stretch reads SSGLSSSNASNS.

Belongs to the Mediator complex subunit 12 family. As to quaternary structure, component of the Mediator complex. As to expression, ubiquitous. Higher expression in vascular tissue, shoot apex and developing floral organs.

It is found in the nucleus. Component of the Mediator complex, a coactivator involved in the regulated transcription of nearly all RNA polymerase II-dependent genes. Mediator functions as a bridge to convey information from gene-specific regulatory proteins to the basal RNA polymerase II transcription machinery. The Mediator complex, having a compact conformation in its free form, is recruited to promoters by direct interactions with regulatory proteins and serves for the assembly of a functional preinitiation complex with RNA polymerase II and the general transcription factors. Flowering regulator which suppresses FLC expression, promotes FT and TSF expression and up-regulates SOC1 and FUL mainly in an FT-dependent manner under long-day conditions. Involved in diverse developmental aspects through gene regulation and modulation of the auxin response. Acts closely together with MAB13. Involved in the regulation of embryo patterning and cotyledon organogenesis by transiently repressing a transcriptional program that interferes with this process. This Arabidopsis thaliana (Mouse-ear cress) protein is Mediator of RNA polymerase II transcription subunit 12 (MED12).